A 481-amino-acid chain; its full sequence is Glycosyl hydrolase family 109 protein 1 (481 aa).

The segment at residues 1-29 is a signal peptide (tat-type signal); it reads MDNSSSRRRFLQTLGLATGALAAGSFANA. NAD(+)-binding positions include 84 to 85, D106, 155 to 158, 175 to 176, and N204; these read ER, WEWH, and EV. Residues Y233, R252, 264 to 267, and Y347 contribute to the substrate site; that span reads YPTH. NAD(+) is bound at residue Y264.

This sequence belongs to the Gfo/Idh/MocA family. Glycosyl hydrolase 109 subfamily. The cofactor is NAD(+). Post-translationally, predicted to be exported by the Tat system. The position of the signal peptide cleavage has not been experimentally proven.

In terms of biological role, glycosidase. In Akkermansia muciniphila (strain ATCC BAA-835 / DSM 22959 / JCM 33894 / BCRC 81048 / CCUG 64013 / CIP 107961 / Muc), this protein is Glycosyl hydrolase family 109 protein 1.